A 142-amino-acid polypeptide reads, in one-letter code: Large ribosomal subunit protein uL23 (142 aa).

It belongs to the universal ribosomal protein uL23 family.

This Kluyveromyces lactis (strain ATCC 8585 / CBS 2359 / DSM 70799 / NBRC 1267 / NRRL Y-1140 / WM37) (Yeast) protein is Large ribosomal subunit protein uL23 (RPL25).